Here is a 524-residue protein sequence, read N- to C-terminus: uncharacterized protein (524 aa).

An N-terminal signal peptide occupies residues 1 to 26; sequence MLKIDMWFKLKSLGFSLISLQALLAS. Residue Cys27 is the site of N-palmitoyl cysteine attachment. The S-diacylglycerol cysteine moiety is linked to residue Cys27. The disordered stretch occupies residues 37 to 68; the sequence is IEEKNDSTTDNNATPFKDEQSDQGTEVNQQPK. The span at 58–68 shows a compositional bias: polar residues; the sequence is DQGTEVNQQPK.

This sequence belongs to the MG067/MG068/MG395 family.

The protein resides in the cell membrane. This is an uncharacterized protein from Mycoplasma genitalium (strain ATCC 33530 / DSM 19775 / NCTC 10195 / G37) (Mycoplasmoides genitalium).